The primary structure comprises 647 residues: Golgi-associated RAB2B interactor protein 3 (647 aa).

The segment covering 188–202 (IPTADTSTETKSTLV) has biased composition (polar residues). Disordered regions lie at residues 188 to 220 (IPTADTSTETKSTLVSEIHGEGDRDSKFQTSQD), 267 to 296 (TAGAAGATGAAGATGAAGSARAAGGAGSAR), 361 to 384 (SKSPGSGQVATGLTGTASKDQERS), and 465 to 573 (RDGS…GFVS). Basic and acidic residues predominate over residues 205–214 (IHGEGDRDSK). Positions 361–378 (SKSPGSGQVATGLTGTAS) are enriched in polar residues. Ser378 is subject to Phosphoserine. Basic and acidic residues predominate over residues 478-491 (TQKEKRERRESDRK). Basic residues predominate over residues 492 to 501 (GSRKSSHHQR). Positions 494–511 (RKSSHHQRTGASRHSSSK) match the Bipartite nuclear localization signal motif. Residues 528-556 (KTREDKKEKGRGSLRDQRHSSSYRSESRT) show a composition bias toward basic and acidic residues. Phosphoserine is present on residues Ser634 and Ser636.

It belongs to the GARIN family. Interacts (via N-terminus) with RAB2B (in GTP-bound form). Interacts with FRG1.

The protein resides in the golgi apparatus. It localises to the nucleus. Its subcellular location is the cajal body. Its function is as follows. May be involved in RNA biogenesis. The chain is Golgi-associated RAB2B interactor protein 3 (Garin3) from Rattus norvegicus (Rat).